A 493-amino-acid chain; its full sequence is Calcium-binding tyrosine phosphorylation-regulated protein (493 aa).

Residues 12 to 49 form the RIIa domain; it reads YGLKTLLEGISRAVLKTNPSNINQFAAAYFQELTMYRG. Disordered stretches follow at residues 85–164, 244–271, 330–354, and 426–493; these read EPGK…VSPE, DLGS…QEPP, NEQS…TTSG, and IVSD…STAE. Polar residues predominate over residues 90 to 100; it reads SVESKVPTQME. Over residues 101–117 the composition is skewed to basic and acidic residues; that stretch reads KSTDTDEDNVTRTEYSD. Residues 141-152 show a composition bias toward low complexity; it reads SSKPATPKTTTP. At Thr-151 the chain carries Phosphothreonine. Ser-155 carries the post-translational modification Phosphoserine. Polar residues-rich tracts occupy residues 426-442 and 461-470; these read IVSD…NSVP and SGTSVKSSSG. The segment covering 484-493 has biased composition (acidic residues); it reads IEPEGESTAE.

Interacts with FSCB. Isoform 3 self-associates. Isoform 3 and isoform 5 interact with GSK3B. Isoform 1 does not interact with GSK3B. Post-translationally, isoform 1 is phosphorylated on tyrosine residues during in vitro capacitation. Isoform 3 and isoform 5 are phosphorylated by GSK3B in vitro. Dephosphorylation affects its ability to bind calcium. In terms of tissue distribution, expressed in elongating spermatids and spermatozoa (at protein level). Isoform 1 is expressed in testis. Isoform 3 and isoform 5 are also expressed in brain, pancreas and numerous brain tumors.

The protein resides in the cytoplasm. It is found in the cytoskeleton. Its subcellular location is the cell projection. It localises to the cilium. The protein localises to the flagellum. The protein resides in the nucleus. Its function is as follows. May function as a regulator of both motility- and head-associated functions such as capacitation and the acrosome reaction. Isoform 1 binds calcium in vitro. Isoform 2 and isoform 6 probably bind calcium. Isoform 3 and isoform 5 do not bind calcium in vitro. Isoform 4 probably does not bind calcium. This is Calcium-binding tyrosine phosphorylation-regulated protein (CABYR) from Homo sapiens (Human).